Consider the following 297-residue polypeptide: Protoheme IX farnesyltransferase 1 (297 aa).

9 helical membrane-spanning segments follow: residues 23 to 43, 45 to 65, 93 to 113, 117 to 137, 145 to 165, 171 to 191, 216 to 236, 241 to 261, and 277 to 297; these read VVVL…RAGV, WSVL…AAVV, LPAL…LLVF, LTAW…TGFL, IVIG…AVSG, PLLL…ALAI, LHIL…YAIH, LYLV…WVLY, and IGYL…LLNL.

This sequence belongs to the UbiA prenyltransferase family. Protoheme IX farnesyltransferase subfamily.

The protein resides in the cell inner membrane. The enzyme catalyses heme b + (2E,6E)-farnesyl diphosphate + H2O = Fe(II)-heme o + diphosphate. It participates in porphyrin-containing compound metabolism; heme O biosynthesis; heme O from protoheme: step 1/1. Functionally, converts heme B (protoheme IX) to heme O by substitution of the vinyl group on carbon 2 of heme B porphyrin ring with a hydroxyethyl farnesyl side group. In Pseudomonas putida (strain ATCC 47054 / DSM 6125 / CFBP 8728 / NCIMB 11950 / KT2440), this protein is Protoheme IX farnesyltransferase 1.